The following is a 398-amino-acid chain: 8-amino-7-oxononanoate synthase (398 aa).

Arginine 23 contacts substrate. 110–111 serves as a coordination point for pyridoxal 5'-phosphate; that stretch reads GY. Substrate is bound at residue histidine 135. The pyridoxal 5'-phosphate site is built by serine 181, histidine 209, and threonine 237. Lysine 240 is subject to N6-(pyridoxal phosphate)lysine. Position 354 (threonine 354) interacts with substrate.

It belongs to the class-II pyridoxal-phosphate-dependent aminotransferase family. BioF subfamily. As to quaternary structure, homodimer. It depends on pyridoxal 5'-phosphate as a cofactor.

It catalyses the reaction 6-carboxyhexanoyl-[ACP] + L-alanine + H(+) = (8S)-8-amino-7-oxononanoate + holo-[ACP] + CO2. Its pathway is cofactor biosynthesis; biotin biosynthesis. In terms of biological role, catalyzes the decarboxylative condensation of pimeloyl-[acyl-carrier protein] and L-alanine to produce 8-amino-7-oxononanoate (AON), [acyl-carrier protein], and carbon dioxide. The polypeptide is 8-amino-7-oxononanoate synthase (Anaeromyxobacter sp. (strain K)).